Here is a 383-residue protein sequence, read N- to C-terminus: MTKRRVVVGMSGGVDSSVTAWLLKEQGYDVVGLFMKNWEDDDDGEYCSTRQDWIDVVSVADLIGIDVEAVNFAAEYKDRVFAEFLREYSAGRTPNPDVLCNAEIKFKAFLDHAMSLGAQTIATGHYARVRERDGRFELLKAFDHTKDQSYFLHRLNQAQLSKTMFPLGEIPKTRVREIAAQIGLPNAKKKDSTGICFIGERPFRDFLNRYLPTKPGPMKTPDGKTVGEHIGLAFYTFGQRKGIGLGGSKDGSGEPWFVAVKDIASNTLYVVQGHDHPWLRSRELVAGNVSWVAGEPPADGARCGAKTRYRQADAPCAFGRAAQAGDERFSLVFDEPQWAVTPGQSAVLYDGDVCLGGGIIESAATGRAGTAPAGRAPALVEAR.

Residues 9-16 and M35 contribute to the ATP site; that span reads GMSGGVDS. Residues 95 to 97 are interaction with target base in tRNA; sequence NPD. The active-site Nucleophile is the C100. An intrachain disulfide couples C100 to C196. An ATP-binding site is contributed by G124. An interaction with tRNA region spans residues 146 to 148; that stretch reads KDQ. The active-site Cysteine persulfide intermediate is the C196. The interval 308–309 is interaction with tRNA; it reads RY.

The protein belongs to the MnmA/TRMU family.

The protein localises to the cytoplasm. The enzyme catalyses S-sulfanyl-L-cysteinyl-[protein] + uridine(34) in tRNA + AH2 + ATP = 2-thiouridine(34) in tRNA + L-cysteinyl-[protein] + A + AMP + diphosphate + H(+). Its function is as follows. Catalyzes the 2-thiolation of uridine at the wobble position (U34) of tRNA, leading to the formation of s(2)U34. This Burkholderia mallei (strain NCTC 10247) protein is tRNA-specific 2-thiouridylase MnmA.